A 384-amino-acid chain; its full sequence is MSTKRDYYEVLGISKGAEAQEIKKAYRKLAMKYHPDRNPGDKEAEEKFKEINEAYEVLSDDTKRKTYDQFGHDGLNGQGGFGGQGGFGGQGFGGFEDMFGDIFGDMFGGSFGGGRARRRGPQRGADIRQSVTISFEEAAFGKKMSIKVNRSEECEECNGTGAKPGTSKKTCSTCNGTGQVRTVQRTPFGNIASSRPCSACNGTGEVIESPCSKCHGTGNTRKVKTIEVDIPAGIDDGQMIKLSGQGEVGEKGAPRGDLYIVVNVKSHPLFTRDGNDIYFEMPITFVQATLGDEIEVPTLDGKVKYSVPEGTQTGTVFRLKEKGIPRIRGNSRGDQYVKVVVEIPKKLNDKQKELLREFAKECGSNVHEKKKTFGQKIEDMFKKK.

One can recognise a J domain in the interval 6-71; the sequence is DYYEVLGISK…TKRKTYDQFG (66 aa). The segment at 141–223 adopts a CR-type zinc-finger fold; sequence GKKMSIKVNR…CHGTGNTRKV (83 aa). Cys154, Cys157, Cys171, Cys174, Cys197, Cys200, Cys211, and Cys214 together coordinate Zn(2+). CXXCXGXG motif repeat units follow at residues 154–161, 171–178, 197–204, and 211–218; these read CEECNGTG, CSTCNGTG, CSACNGTG, and CSKCHGTG.

The protein belongs to the DnaJ family. In terms of assembly, homodimer. Zn(2+) is required as a cofactor.

Its subcellular location is the cytoplasm. Functionally, participates actively in the response to hyperosmotic and heat shock by preventing the aggregation of stress-denatured proteins and by disaggregating proteins, also in an autonomous, DnaK-independent fashion. Unfolded proteins bind initially to DnaJ; upon interaction with the DnaJ-bound protein, DnaK hydrolyzes its bound ATP, resulting in the formation of a stable complex. GrpE releases ADP from DnaK; ATP binding to DnaK triggers the release of the substrate protein, thus completing the reaction cycle. Several rounds of ATP-dependent interactions between DnaJ, DnaK and GrpE are required for fully efficient folding. Also involved, together with DnaK and GrpE, in the DNA replication of plasmids through activation of initiation proteins. This Clostridioides difficile (strain 630) (Peptoclostridium difficile) protein is Chaperone protein DnaJ.